We begin with the raw amino-acid sequence, 464 residues long: Secretion-regulating guanine nucleotide exchange factor (464 aa).

RCC1 repeat units follow at residues 14 to 66 (AAAL…VVTD), 68 to 118 (GSLF…ILTE), 119 to 170 (NGQV…AATA), 172 to 229 (GTVF…SLTD), 230 to 282 (AGEL…AQTV), 283 to 349 (TGKV…LAVI), and 350 to 401 (GGVC…ALCQ). A compositionally biased stretch (basic and acidic residues) spans 301-313 (VETREGWESEKQD). A disordered region spans residues 301–323 (VETREGWESEKQDPSLPGSGPQK). The segment at 411–464 (HPSVTSPSPDATKEARSQEAMEQERNQKERHAETSPQAQSDRFRNGGLVAETLE) is disordered. Over residues 421–443 (ATKEARSQEAMEQERNQKERHAE) the composition is skewed to basic and acidic residues. A Phosphoserine modification is found at Ser427.

In terms of assembly, interacts with SEC5. The interaction occurs only in the presence of magnesium or manganese and is stimulated by dCTP or GTP.

The protein localises to the cytoplasm. It localises to the nucleus. In terms of biological role, probable guanine nucleotide exchange factor (GEF), which may be involved in the secretion process. The polypeptide is Secretion-regulating guanine nucleotide exchange factor (SERGEF) (Bos taurus (Bovine)).